Consider the following 239-residue polypeptide: Uracil-DNA glycosylase (239 aa).

Catalysis depends on D65, which acts as the Proton acceptor.

The protein belongs to the uracil-DNA glycosylase (UDG) superfamily. UNG family.

The protein localises to the cytoplasm. The catalysed reaction is Hydrolyzes single-stranded DNA or mismatched double-stranded DNA and polynucleotides, releasing free uracil.. In terms of biological role, excises uracil residues from the DNA which can arise as a result of misincorporation of dUMP residues by DNA polymerase or due to deamination of cytosine. The chain is Uracil-DNA glycosylase from Levilactobacillus brevis (strain ATCC 367 / BCRC 12310 / CIP 105137 / JCM 1170 / LMG 11437 / NCIMB 947 / NCTC 947) (Lactobacillus brevis).